Here is a 311-residue protein sequence, read N- to C-terminus: N-acetylmuramic acid 6-phosphate etherase (311 aa).

Residues 66–230 (VVEAFEADGR…TTAAMVRLGK (165 aa)) form the SIS domain. E94 (proton donor) is an active-site residue. The active site involves E125.

This sequence belongs to the GCKR-like family. MurNAc-6-P etherase subfamily. In terms of assembly, homodimer.

It catalyses the reaction N-acetyl-D-muramate 6-phosphate + H2O = N-acetyl-D-glucosamine 6-phosphate + (R)-lactate. Its pathway is amino-sugar metabolism; N-acetylmuramate degradation. Functionally, specifically catalyzes the cleavage of the D-lactyl ether substituent of MurNAc 6-phosphate, producing GlcNAc 6-phosphate and D-lactate. This chain is N-acetylmuramic acid 6-phosphate etherase, found in Salinibacter ruber (strain DSM 13855 / M31).